A 162-amino-acid polypeptide reads, in one-letter code: Large ribosomal subunit protein bL17 (162 aa).

Positions 118-162 are disordered; the sequence is RAPAAAPEAEEKGEKKAAGKAEKAPKAAKAPKAEKKPAKKAAKAE. Positions 126 to 162 are enriched in basic and acidic residues; it reads AEEKGEKKAAGKAEKAPKAAKAPKAEKKPAKKAAKAE.

Belongs to the bacterial ribosomal protein bL17 family. Part of the 50S ribosomal subunit. Contacts protein L32.

In Anaeromyxobacter dehalogenans (strain 2CP-C), this protein is Large ribosomal subunit protein bL17.